The following is a 547-amino-acid chain: Chaperonin GroEL (547 aa).

ATP is bound by residues 30–33 (TLGP), Lys51, 87–91 (DGTTT), Gly415, and Asp496.

It belongs to the chaperonin (HSP60) family. In terms of assembly, forms a cylinder of 14 subunits composed of two heptameric rings stacked back-to-back. Interacts with the co-chaperonin GroES.

It localises to the cytoplasm. It catalyses the reaction ATP + H2O + a folded polypeptide = ADP + phosphate + an unfolded polypeptide.. Its function is as follows. Together with its co-chaperonin GroES, plays an essential role in assisting protein folding. The GroEL-GroES system forms a nano-cage that allows encapsulation of the non-native substrate proteins and provides a physical environment optimized to promote and accelerate protein folding. The polypeptide is Chaperonin GroEL (Haemophilus ducreyi (strain 35000HP / ATCC 700724)).